Reading from the N-terminus, the 665-residue chain is Methionine--tRNA ligase (665 aa).

A 'HIGH' region motif is present at residues 12-22 (YYPSGKLHIGS). The 'KMSKS' region motif lies at 308 to 312 (KMSKS). Residue Lys-311 participates in ATP binding. Positions 562–665 (TFDAVEIRVA…PSVPNGSIIG (104 aa)) constitute a tRNA-binding domain.

This sequence belongs to the class-I aminoacyl-tRNA synthetase family. MetG type 2B subfamily. As to quaternary structure, homodimer.

The protein resides in the cytoplasm. The catalysed reaction is tRNA(Met) + L-methionine + ATP = L-methionyl-tRNA(Met) + AMP + diphosphate. Its function is as follows. Is required not only for elongation of protein synthesis but also for the initiation of all mRNA translation through initiator tRNA(fMet) aminoacylation. In Streptococcus pyogenes serotype M6 (strain ATCC BAA-946 / MGAS10394), this protein is Methionine--tRNA ligase (metG).